A 338-amino-acid polypeptide reads, in one-letter code: MREQLEQMRQQALSAIAAATTEEMLNEVRVRYLGRKGELTGLMKGLGSLPADERPKVGQLVNTVKDEVEALIEQTMNRAREEATAKRLATERIDISLPGRGRRQGSKHPVTLVIEEVSEIFAGLGFSVAEGPEIEHDWYNFEALNFPPEHPARDMQDTFFVENELLLRTHTSPVQIRTMLKQKPPVRIIAPGTVYRCDSDATHSPMFHQIEGLMVDSQVSFADLKGILTTFTNQLFGQKTGVRLRPSFFPFTEPSAEVDIACVICGGSGCRVCKQTGWLEILGAGMVDPEVFRHVGYDPETISGFAFGMGIERIAMLKYGISDMRLLFENDVRFLKQF.

Residue Glu-253 participates in Mg(2+) binding.

It belongs to the class-II aminoacyl-tRNA synthetase family. Phe-tRNA synthetase alpha subunit type 1 subfamily. Tetramer of two alpha and two beta subunits. Mg(2+) is required as a cofactor.

The protein resides in the cytoplasm. The enzyme catalyses tRNA(Phe) + L-phenylalanine + ATP = L-phenylalanyl-tRNA(Phe) + AMP + diphosphate + H(+). This chain is Phenylalanine--tRNA ligase alpha subunit, found in Trichlorobacter lovleyi (strain ATCC BAA-1151 / DSM 17278 / SZ) (Geobacter lovleyi).